We begin with the raw amino-acid sequence, 525 residues long: GMP synthase [glutamine-hydrolyzing] (525 aa).

A Glutamine amidotransferase type-1 domain is found at 9-207 (RILILDFGSQ…VLEISGCEAL (199 aa)). Cys-86 functions as the Nucleophile in the catalytic mechanism. Residues His-181 and Glu-183 contribute to the active site. Residues 208-400 (WTPANIVEDA…LGLPYDMVYR (193 aa)) form the GMPS ATP-PPase domain. 235–241 (SGGVDSS) contacts ATP.

Homodimer.

It catalyses the reaction XMP + L-glutamine + ATP + H2O = GMP + L-glutamate + AMP + diphosphate + 2 H(+). Its pathway is purine metabolism; GMP biosynthesis; GMP from XMP (L-Gln route): step 1/1. In terms of biological role, catalyzes the synthesis of GMP from XMP. The protein is GMP synthase [glutamine-hydrolyzing] of Ectopseudomonas mendocina (strain ymp) (Pseudomonas mendocina).